Reading from the N-terminus, the 280-residue chain is L-proline cis-4-hydroxylase (280 aa).

Fe cation-binding residues include histidine 106, aspartate 108, and histidine 154. Residue arginine 164 coordinates 2-oxoglutarate.

This sequence belongs to the L-proline cis-4-/cis-3-hydroxylase family. Fe(2+) serves as cofactor.

The catalysed reaction is L-proline + 2-oxoglutarate + O2 = cis-4-hydroxy-L-proline + succinate + CO2. Inhibited by metal ions such as Co(2+), Zn(2+), Cu(2+) or Ni(2+). Is also inhibited by EDTA or diethylpyrocarbonate (DEPC) in vitro. Unlike the procollagen-proline cis-3- and trans-4-hydroxylases from mammals, does not necessarily require L-ascorbate for activity although it does increase the activity of the enzyme. Dioxygenase that catalyzes the 2-oxoglutarate-dependent selective hydroxylation of free L-proline to cis-4-hydroxy-L-proline (cis-4-Hyp). This is L-proline cis-4-hydroxylase from Mesorhizobium japonicum (strain LMG 29417 / CECT 9101 / MAFF 303099) (Mesorhizobium loti (strain MAFF 303099)).